We begin with the raw amino-acid sequence, 341 residues long: Protein pelota homolog (341 aa).

It belongs to the eukaryotic release factor 1 family. Pelota subfamily. Monomer. The cofactor is a divalent metal cation.

The protein localises to the cytoplasm. Its function is as follows. May function in recognizing stalled ribosomes, interact with stem-loop structures in stalled mRNA molecules, and effect endonucleolytic cleavage of the mRNA. May play a role in the release non-functional ribosomes and degradation of damaged mRNAs. Has endoribonuclease activity. The sequence is that of Protein pelota homolog from Methanoregula boonei (strain DSM 21154 / JCM 14090 / 6A8).